The following is a 311-amino-acid chain: Ribosomal RNA small subunit methyltransferase H (311 aa).

S-adenosyl-L-methionine-binding positions include 39–41 (GGH), aspartate 59, phenylalanine 87, aspartate 102, and histidine 109.

This sequence belongs to the methyltransferase superfamily. RsmH family.

The protein resides in the cytoplasm. The enzyme catalyses cytidine(1402) in 16S rRNA + S-adenosyl-L-methionine = N(4)-methylcytidine(1402) in 16S rRNA + S-adenosyl-L-homocysteine + H(+). In terms of biological role, specifically methylates the N4 position of cytidine in position 1402 (C1402) of 16S rRNA. In Porphyromonas gingivalis (strain ATCC 33277 / DSM 20709 / CIP 103683 / JCM 12257 / NCTC 11834 / 2561), this protein is Ribosomal RNA small subunit methyltransferase H.